The following is a 76-amino-acid chain: uncharacterized protein (76 aa).

The HTH cro/C1-type domain maps to 6-60 (LKKNRLEKGFTQEEVAKAAQIGRAYYTMIENGTRKPSVIVSKKIGEKLGFDWTIF). Positions 17–36 (QEEVAKAAQIGRAYYTMIEN) form a DNA-binding region, H-T-H motif.

This is an uncharacterized protein from Bacillus subtilis (strain 168).